Here is a 112-residue protein sequence, read N- to C-terminus: Large ribosomal subunit protein uL22 (112 aa).

This sequence belongs to the universal ribosomal protein uL22 family. As to quaternary structure, part of the 50S ribosomal subunit.

In terms of biological role, this protein binds specifically to 23S rRNA; its binding is stimulated by other ribosomal proteins, e.g. L4, L17, and L20. It is important during the early stages of 50S assembly. It makes multiple contacts with different domains of the 23S rRNA in the assembled 50S subunit and ribosome. The globular domain of the protein is located near the polypeptide exit tunnel on the outside of the subunit, while an extended beta-hairpin is found that lines the wall of the exit tunnel in the center of the 70S ribosome. The protein is Large ribosomal subunit protein uL22 of Akkermansia muciniphila (strain ATCC BAA-835 / DSM 22959 / JCM 33894 / BCRC 81048 / CCUG 64013 / CIP 107961 / Muc).